A 201-amino-acid polypeptide reads, in one-letter code: Imidazoleglycerol-phosphate dehydratase (201 aa).

The protein belongs to the imidazoleglycerol-phosphate dehydratase family.

It is found in the cytoplasm. It catalyses the reaction D-erythro-1-(imidazol-4-yl)glycerol 3-phosphate = 3-(imidazol-4-yl)-2-oxopropyl phosphate + H2O. It functions in the pathway amino-acid biosynthesis; L-histidine biosynthesis; L-histidine from 5-phospho-alpha-D-ribose 1-diphosphate: step 6/9. In Prochlorococcus marinus (strain MIT 9515), this protein is Imidazoleglycerol-phosphate dehydratase.